The primary structure comprises 387 residues: 17-beta-hydroxysteroid dehydrogenase type 2 (387 aa).

Residues 4–24 traverse the membrane as a helical; Signal-anchor for type II membrane protein segment; it reads FFSDTAWICLAVPTVLCGTVF. 82–111 is an NAD(+) binding site; it reads QKAVLVTGGDCGLGHALCKYLDELGFTVFA. Ser-219 contributes to the substrate binding site. Tyr-232 is a catalytic residue.

This sequence belongs to the short-chain dehydrogenases/reductases (SDR) family. Homodimer. In terms of tissue distribution, expressed in placenta.

It localises to the endoplasmic reticulum membrane. It carries out the reaction 17beta-estradiol + NAD(+) = estrone + NADH + H(+). The enzyme catalyses testosterone + NAD(+) = androst-4-ene-3,17-dione + NADH + H(+). It catalyses the reaction 17beta-hydroxy-5alpha-androstan-3-one + NAD(+) = 5alpha-androstan-3,17-dione + NADH + H(+). The catalysed reaction is (20S)-hydroxypregn-4-en-3-one + NAD(+) = progesterone + NADH + H(+). Its function is as follows. Catalyzes the NAD-dependent oxidation of the highly active 17beta-hydroxysteroids, such as estradiol (E2), testosterone (T), and dihydrotestosterone (DHT), to their less active forms and thus regulates the biological potency of these steroids. Oxidizes estradiol to estrone, testosterone to androstenedione, and dihydrotestosterone to 5alpha-androstan-3,17-dione. Also has 20-alpha-HSD activity. This is 17-beta-hydroxysteroid dehydrogenase type 2 from Homo sapiens (Human).